A 283-amino-acid chain; its full sequence is Nucleoid occlusion protein (283 aa).

Residues 142–161 (ESLAQRLGKGQSTIANKLRL) constitute a DNA-binding region (H-T-H motif).

Belongs to the ParB family.

The protein localises to the cytoplasm. Its subcellular location is the nucleoid. Functionally, effects nucleoid occlusion by binding relatively nonspecifically to DNA and preventing the assembly of the division machinery in the vicinity of the nucleoid, especially under conditions that disturb the cell cycle. It helps to coordinate cell division and chromosome segregation by preventing the formation of the Z ring through the nucleoid, which would cause chromosome breakage. The protein is Nucleoid occlusion protein of Shouchella clausii (strain KSM-K16) (Alkalihalobacillus clausii).